The chain runs to 450 residues: Tubulin beta-3 chain (450 aa).

The MREI motif motif lies at 1 to 4 (MREI). GDP contacts are provided by G10, Q11, C12, and Q15. Q11 is a GTP binding site. E69 is a GTP binding site. A Mg(2+)-binding site is contributed by E69. GDP-binding residues include N99, S138, G142, T143, and G144. GTP-binding residues include S138, G142, T143, and G144. S172 is subject to Phosphoserine; by CDK1. The GDP site is built by D177, N204, Y222, and N226. N204 contributes to the GTP binding site. N226 contributes to the GTP binding site. Residues 425 to 450 (YQDATAEEEGEMYEDDEEESEAQGPK) form a disordered region. Acidic residues predominate over residues 429-450 (TAEEEGEMYEDDEEESEAQGPK). Residue E438 is modified to 5-glutamyl polyglutamate. S444 bears the Phosphoserine mark.

The protein belongs to the tubulin family. In terms of assembly, heterodimer of alpha- and beta-tubulin. A typical microtubule is a hollow water-filled tube with an outer diameter of 25 nm and an inner diameter of 15 nM. Alpha-beta heterodimers associate head-to-tail to form protofilaments running lengthwise along the microtubule wall with the beta-tubulin subunit facing the microtubule plus end conferring a structural polarity. Microtubules usually have 13 protofilaments but different protofilament numbers can be found in some organisms and specialized cells. Interacts with gamma-tubulin; the interaction allows microtubules to nucleate from the gamma-tubulin ring complex (gTuRC). Interacts with UNC5C (via cytoplasmic domain); this interaction is decreased by NTN1/Netrin-1. Interacts with NLRP5/MATER at cytoskeleton microtubules. Interacts with DPYSL5. Interacts with CFAP61. It depends on Mg(2+) as a cofactor. Some glutamate residues at the C-terminus are polyglutamylated, resulting in polyglutamate chains on the gamma-carboxyl group. Polyglutamylation plays a key role in microtubule severing by spastin (SPAST). SPAST preferentially recognizes and acts on microtubules decorated with short polyglutamate tails: severing activity by SPAST increases as the number of glutamates per tubulin rises from one to eight, but decreases beyond this glutamylation threshold. Glutamylation is also involved in cilia motility. Post-translationally, some glutamate residues at the C-terminus are monoglycylated but not polyglycylated due to the absence of functional TTLL10 in human. Monoglycylation is mainly limited to tubulin incorporated into cilia and flagella axonemes, which is required for their stability and maintenance. Flagella glycylation controls sperm motility. Both polyglutamylation and monoglycylation can coexist on the same protein on adjacent residues, and lowering glycylation levels increases polyglutamylation, and reciprocally. In terms of processing, phosphorylated on Ser-172 by CDK1 during the cell cycle, from metaphase to telophase, but not in interphase. This phosphorylation inhibits tubulin incorporation into microtubules. As to expression, expression is primarily restricted to central and peripheral nervous system. Greatly increased expression in most cancerous tissues.

The protein resides in the cytoplasm. It localises to the cytoskeleton. It is found in the cell projection. Its subcellular location is the growth cone. The protein localises to the lamellipodium. The protein resides in the filopodium. Tubulin is the major constituent of microtubules, protein filaments consisting of alpha- and beta-tubulin heterodimers. Microtubules grow by the addition of GTP-tubulin dimers to the microtubule end, where a stabilizing cap forms. Below the cap, alpha-beta tubulin heterodimers are in GDP-bound state, owing to GTPase activity of alpha-tubulin. TUBB3 plays a critical role in proper axon guidance and maintenance. Binding of NTN1/Netrin-1 to its receptor UNC5C might cause dissociation of UNC5C from polymerized TUBB3 in microtubules and thereby lead to increased microtubule dynamics and axon repulsion. Plays a role in dorsal root ganglion axon projection towards the spinal cord. In Homo sapiens (Human), this protein is Tubulin beta-3 chain (TUBB3).